The chain runs to 398 residues: CCA-adding enzyme (398 aa).

2 residues coordinate ATP: G32 and R35. CTP is bound by residues G32 and R35. D45 and D47 together coordinate Mg(2+). Residues R116, D159, R162, R165, and R168 each coordinate ATP. Positions 116, 159, 162, 165, and 168 each coordinate CTP.

Belongs to the tRNA nucleotidyltransferase/poly(A) polymerase family. Bacterial CCA-adding enzyme type 3 subfamily. In terms of assembly, homodimer. Requires Mg(2+) as cofactor.

The catalysed reaction is a tRNA precursor + 2 CTP + ATP = a tRNA with a 3' CCA end + 3 diphosphate. It catalyses the reaction a tRNA with a 3' CCA end + 2 CTP + ATP = a tRNA with a 3' CCACCA end + 3 diphosphate. Its function is as follows. Catalyzes the addition and repair of the essential 3'-terminal CCA sequence in tRNAs without using a nucleic acid template. Adds these three nucleotides in the order of C, C, and A to the tRNA nucleotide-73, using CTP and ATP as substrates and producing inorganic pyrophosphate. tRNA 3'-terminal CCA addition is required both for tRNA processing and repair. Also involved in tRNA surveillance by mediating tandem CCA addition to generate a CCACCA at the 3' terminus of unstable tRNAs. While stable tRNAs receive only 3'-terminal CCA, unstable tRNAs are marked with CCACCA and rapidly degraded. In Lactobacillus johnsonii (strain CNCM I-12250 / La1 / NCC 533), this protein is CCA-adding enzyme.